The sequence spans 463 residues: Carnosine N-methyltransferase (463 aa).

Disordered stretches follow at residues 1–64 (MTKN…SQLK) and 79–104 (KHNHDHSHDHNHDYDDNNEDDEEKEE). Positions 9-58 (KSNNSNISNNNNNNNNNNNNNNNNNNNNNNNNNNNNNNNNNNNNNNNNKN) are enriched in low complexity. Positions 79-93 (KHNHDHSHDHNHDYD) are enriched in basic and acidic residues. Over residues 94–103 (DNNEDDEEKE) the composition is skewed to acidic residues. S-adenosyl-L-methionine contacts are provided by glutamine 215, arginine 218, glycine 260, glutamate 281, aspartate 351, phenylalanine 352, and cysteine 367. Carnosine is bound at residue aspartate 371. Tyrosine 379 serves as a coordination point for S-adenosyl-L-methionine. Histidine 402 and tyrosine 450 together coordinate carnosine.

It belongs to the carnosine N-methyltransferase family.

The catalysed reaction is carnosine + S-adenosyl-L-methionine = anserine + S-adenosyl-L-homocysteine + H(+). Its function is as follows. N-methyltransferase that mediates the formation of anserine (beta-alanyl-N(Pi)-methyl-L-histidine) from carnosine. In Dictyostelium discoideum (Social amoeba), this protein is Carnosine N-methyltransferase.